A 151-amino-acid chain; its full sequence is Prefoldin subunit alpha (151 aa).

The interval 120–151 (TVEEETASLEEKAQQAQQQQMQQLQQMQQEDE) is disordered. Residues 133–151 (QQAQQQQMQQLQQMQQEDE) show a composition bias toward low complexity.

Belongs to the prefoldin subunit alpha family. Heterohexamer of two alpha and four beta subunits.

Its subcellular location is the cytoplasm. Its function is as follows. Molecular chaperone capable of stabilizing a range of proteins. Seems to fulfill an ATP-independent, HSP70-like function in archaeal de novo protein folding. This is Prefoldin subunit alpha from Natronomonas pharaonis (strain ATCC 35678 / DSM 2160 / CIP 103997 / JCM 8858 / NBRC 14720 / NCIMB 2260 / Gabara) (Halobacterium pharaonis).